We begin with the raw amino-acid sequence, 168 residues long: Ribosome rescue factor SmrB (168 aa).

A Smr domain is found at 92–167 (LDLHGLTKEQ…GDAAILILFE (76 aa)).

It belongs to the SmrB family. In terms of assembly, associates with collided ribosomes, but not with correctly translating polysomes.

In terms of biological role, acts as a ribosome collision sensor. Detects stalled/collided disomes (pairs of ribosomes where the leading ribosome is stalled and a second ribosome has collided with it) and endonucleolytically cleaves mRNA at the 5' boundary of the stalled ribosome. Stalled/collided disomes form a new interface (primarily via the 30S subunits) that binds SmrB. Cleaved mRNA becomes available for tmRNA ligation, leading to ribosomal subunit dissociation and rescue of stalled ribosomes. This is Ribosome rescue factor SmrB from Pasteurella multocida (strain Pm70).